A 100-amino-acid polypeptide reads, in one-letter code: Integration host factor subunit beta (100 aa).

It belongs to the bacterial histone-like protein family. As to quaternary structure, heterodimer of an alpha and a beta chain.

Functionally, this protein is one of the two subunits of integration host factor, a specific DNA-binding protein that functions in genetic recombination as well as in transcriptional and translational control. This is Integration host factor subunit beta from Rhodospirillum rubrum (strain ATCC 11170 / ATH 1.1.1 / DSM 467 / LMG 4362 / NCIMB 8255 / S1).